We begin with the raw amino-acid sequence, 209 residues long: MKILIASSHGYKVRETKAFLKKIGEFDIFSLVDYPSYTPPKETGETPEENAIQKGVFAAQTFRCWTIADDSMLIIPALGGLPGKLSASFSGEHASDKDHRKKLLEEMLLLENPIDRSAYFECCVVLVSPFGKIFKAHASCEGTIVFKERGSSGFGYDPLFSKHDYKQTYAELPEEIKNQVSHRAKALAKLQPYVEMAFANHLLARNESL.

7-12 (SSHGYK) is a substrate binding site. Aspartate 70 acts as the Proton acceptor in catalysis. Position 70 (aspartate 70) interacts with Mg(2+). Substrate-binding positions include serine 71, 154 to 157 (FGYD), lysine 177, and 182 to 183 (HR).

Belongs to the HAM1 NTPase family. In terms of assembly, homodimer. Mg(2+) serves as cofactor.

The enzyme catalyses XTP + H2O = XMP + diphosphate + H(+). It carries out the reaction dITP + H2O = dIMP + diphosphate + H(+). It catalyses the reaction ITP + H2O = IMP + diphosphate + H(+). Pyrophosphatase that catalyzes the hydrolysis of nucleoside triphosphates to their monophosphate derivatives, with a high preference for the non-canonical purine nucleotides XTP (xanthosine triphosphate), dITP (deoxyinosine triphosphate) and ITP. Seems to function as a house-cleaning enzyme that removes non-canonical purine nucleotides from the nucleotide pool, thus preventing their incorporation into DNA/RNA and avoiding chromosomal lesions. The chain is dITP/XTP pyrophosphatase from Chlamydia muridarum (strain MoPn / Nigg).